The sequence spans 459 residues: MRERGPVTPAKSSAPPERPWTTGTAPGSVPLLGHTMALWRRPLQFLASLPAHGDLVEVRLGPSRAYLACHPELVRQVLLNPRVFDKGGVFDKARQLLGNSLSVSRGEDHRYQRRMIQPAFHTPKIAAYTAAVADDTRAAIGSWEPGRTLDISDTMHALLMRVAARTLFSTGIDEATIDEARHCLRIVSDGIYKRTMAPLGIMEKLPTPGNRRYDRANARLRQIVDEMIRERRRSGADHGDLLSTLLRAEHPETGKGLDDGEVLDQVVTFLVAGSETTASTLAFVFHLLGAHPEVEKRVHAEIDEILEGRSPTFEDLPSLEYTRGVITESLRLYPPSWMAMRVTAAETELGGRTVPAGTMILYSAQALHHNPELFPDPERFDPERWLGDRAKEVERGALLPFGAGSHKCIGDVLALTETALIVATIASRWRLRPVPGTTLRPEPKATLEPGPLPMVCEPR.

The tract at residues 1–27 (MRERGPVTPAKSSAPPERPWTTGTAPG) is disordered. Heme is bound at residue Cys408.

Belongs to the cytochrome P450 family. Heme serves as cofactor.

The catalysed reaction is cyclooctat-9-en-7-ol + AH2 + O2 = cyclooctat-9-ene-5,7-diol + A + H2O. In terms of biological role, involved in the biosynthesis of cyclooctatin, a potent inhibitor of lysophospholipase. Catalyzes the stereospecific hydroxylation of cyclooctat-9-en-7-ol to form cyclooctat-9-ene-5,7-diol. This Streptomyces melanosporofaciens protein is Cyclooctat-9-en-7-ol 5-monooxygenase.